Consider the following 130-residue polypeptide: MSLMDPLANALNHLSNCERVGKDVAYVQPASKLIGRVFKVMQDKGYMGNFEYIEDGKAGIYKVELTGHINKCGAVRPRYAVKKTEFEKFEKRYLPAKGFGLLIVSTPKGLMTHDEAKSNGLGGRLISYIY.

The protein belongs to the universal ribosomal protein uS8 family. Part of the 30S ribosomal subunit.

In terms of biological role, one of the primary rRNA binding proteins, it binds directly to 16S rRNA central domain where it helps coordinate assembly of the platform of the 30S subunit. In Methanococcus aeolicus (strain ATCC BAA-1280 / DSM 17508 / OCM 812 / Nankai-3), this protein is Small ribosomal subunit protein uS8.